Here is a 330-residue protein sequence, read N- to C-terminus: tRNA U34 carboxymethyltransferase (330 aa).

Residues K91, W105, K110, G130, 152 to 154 (DPS), 181 to 182 (IE), M196, Y200, and R315 contribute to the carboxy-S-adenosyl-L-methionine site.

Belongs to the class I-like SAM-binding methyltransferase superfamily. CmoB family. Homotetramer.

The catalysed reaction is carboxy-S-adenosyl-L-methionine + 5-hydroxyuridine(34) in tRNA = 5-carboxymethoxyuridine(34) in tRNA + S-adenosyl-L-homocysteine + H(+). In terms of biological role, catalyzes carboxymethyl transfer from carboxy-S-adenosyl-L-methionine (Cx-SAM) to 5-hydroxyuridine (ho5U) to form 5-carboxymethoxyuridine (cmo5U) at position 34 in tRNAs. In Shewanella halifaxensis (strain HAW-EB4), this protein is tRNA U34 carboxymethyltransferase.